A 542-amino-acid chain; its full sequence is uncharacterized protein (542 aa).

The next 12 membrane-spanning stretches (helical) occupy residues L12–L32, F57–Y77, V94–A114, A123–A143, L168–V188, F191–L211, I216–L236, S243–I263, I277–A297, V313–T333, V358–M378, and L391–L411.

The protein belongs to the monovalent cation:proton antiporter 1 (CPA1) transporter (TC 2.A.36) family.

Its subcellular location is the cell membrane. This is an uncharacterized protein from Mycobacterium bovis (strain ATCC BAA-935 / AF2122/97).